Consider the following 118-residue polypeptide: Mating-type P-specific polypeptide Pc (118 aa).

The segment at residues 29–97 is a DNA-binding region (HMG box); it reads KTTIYKNGFM…VRRQIAKLER (69 aa).

The protein resides in the nucleus. Mating type proteins are sequence specific DNA-binding proteins that act as master switches in yeast differentiation by controlling gene expression in a cell type-specific fashion. Required for conjugation and efficient meiosis. This is Mating-type P-specific polypeptide Pc (mat2-Pc) from Schizosaccharomyces pombe (Fission yeast).